Consider the following 430-residue polypeptide: Long-chain specific acyl-CoA dehydrogenase, mitochondrial (430 aa).

Residues 1–30 (MAARLLRGSLRFLGGHCAARPLPALRCSHS) constitute a mitochondrion transit peptide. Lys42 bears the N6-acetyllysine mark. Residues Ser54 and Ser55 each carry the phosphoserine modification. Lys66 and Lys81 each carry N6-acetyllysine; alternate. Residues Lys66 and Lys81 each carry the N6-succinyllysine; alternate modification. N6-acetyllysine occurs at positions 92 and 95. The residue at position 165 (Lys165) is an N6-succinyllysine. FAD is bound by residues 170 to 179 (IAMTELGAGS) and 203 to 205 (FIS). Ser179 is a binding site for substrate. A substrate-binding site is contributed by 227-228 (AR). Lys240 carries the post-translational modification N6-succinyllysine. N6-acetyllysine; alternate is present on residues Lys254 and Lys279. N6-succinyllysine; alternate is present on residues Lys254 and Lys279. Substrate-binding positions include Tyr282 and 289–292 (PQER). The Proton acceptor role is filled by Glu291. Arg317 contacts FAD. N6-acetyllysine is present on Lys318. The residue at position 322 (Lys322) is an N6-acetyllysine; alternate. Lys322 carries the N6-succinyllysine; alternate modification. Position 328 (Gln328) interacts with FAD. Position 358 is an N6-acetyllysine (Lys358). Ser362 bears the Phosphoserine mark. 385-389 (QLHGG) contributes to the FAD binding site. 412 to 413 (GG) is a binding site for substrate. Residue 414–416 (TNE) coordinates FAD.

The protein belongs to the acyl-CoA dehydrogenase family. In terms of assembly, homotetramer. FAD is required as a cofactor. In terms of processing, acetylation at Lys-318 and Lys-322 in proximity of the cofactor-binding sites strongly reduces catalytic activity. These sites are deacetylated by SIRT3.

The protein localises to the mitochondrion matrix. It catalyses the reaction a long-chain 2,3-saturated fatty acyl-CoA + oxidized [electron-transfer flavoprotein] + H(+) = a long-chain (2E)-enoyl-CoA + reduced [electron-transfer flavoprotein]. The catalysed reaction is hexanoyl-CoA + oxidized [electron-transfer flavoprotein] + H(+) = (2E)-hexenoyl-CoA + reduced [electron-transfer flavoprotein]. The enzyme catalyses octanoyl-CoA + oxidized [electron-transfer flavoprotein] + H(+) = (2E)-octenoyl-CoA + reduced [electron-transfer flavoprotein]. It carries out the reaction decanoyl-CoA + oxidized [electron-transfer flavoprotein] + H(+) = (2E)-decenoyl-CoA + reduced [electron-transfer flavoprotein]. It catalyses the reaction dodecanoyl-CoA + oxidized [electron-transfer flavoprotein] + H(+) = (2E)-dodecenoyl-CoA + reduced [electron-transfer flavoprotein]. The catalysed reaction is tetradecanoyl-CoA + oxidized [electron-transfer flavoprotein] + H(+) = (2E)-tetradecenoyl-CoA + reduced [electron-transfer flavoprotein]. The enzyme catalyses oxidized [electron-transfer flavoprotein] + hexadecanoyl-CoA + H(+) = (2E)-hexadecenoyl-CoA + reduced [electron-transfer flavoprotein]. It carries out the reaction octadecanoyl-CoA + oxidized [electron-transfer flavoprotein] + H(+) = (2E)-octadecenoyl-CoA + reduced [electron-transfer flavoprotein]. It catalyses the reaction eicosanoyl-CoA + oxidized [electron-transfer flavoprotein] + H(+) = (2E)-eicosenoyl-CoA + reduced [electron-transfer flavoprotein]. The catalysed reaction is docosanoyl-CoA + oxidized [electron-transfer flavoprotein] + H(+) = (2E)-docosenoyl-CoA + reduced [electron-transfer flavoprotein]. The enzyme catalyses tetracosanoyl-CoA + oxidized [electron-transfer flavoprotein] + H(+) = (2E)-tetracosenoyl-CoA + reduced [electron-transfer flavoprotein]. It carries out the reaction (5E)-tetradecenoyl-CoA + oxidized [electron-transfer flavoprotein] + H(+) = (2E,5E)-tetradecadienoyl-CoA + reduced [electron-transfer flavoprotein]. It catalyses the reaction (5Z)-tetradecenoyl-CoA + oxidized [electron-transfer flavoprotein] + H(+) = (2E,5Z)-tetradecadienoyl-CoA + reduced [electron-transfer flavoprotein]. The catalysed reaction is oxidized [electron-transfer flavoprotein] + (9Z)-octadecenoyl-CoA + H(+) = (2E,9Z)-octadecadienoyl-CoA + reduced [electron-transfer flavoprotein]. The protein operates within lipid metabolism; mitochondrial fatty acid beta-oxidation. Long-chain specific acyl-CoA dehydrogenase is one of the acyl-CoA dehydrogenases that catalyze the first step of mitochondrial fatty acid beta-oxidation, an aerobic process breaking down fatty acids into acetyl-CoA and allowing the production of energy from fats. The first step of fatty acid beta-oxidation consists in the removal of one hydrogen from C-2 and C-3 of the straight-chain fatty acyl-CoA thioester, resulting in the formation of trans-2-enoyl-CoA. Among the different mitochondrial acyl-CoA dehydrogenases, long-chain specific acyl-CoA dehydrogenase can act on saturated and unsaturated acyl-CoAs with 6 to 24 carbons with a preference for 8 to 18 carbons long primary chains. The protein is Long-chain specific acyl-CoA dehydrogenase, mitochondrial of Macaca fascicularis (Crab-eating macaque).